A 199-amino-acid polypeptide reads, in one-letter code: Chaperone protein TorD (199 aa).

It belongs to the TorD/DmsD family. TorD subfamily.

Its subcellular location is the cytoplasm. Its function is as follows. Involved in the biogenesis of TorA. Acts on TorA before the insertion of the molybdenum cofactor and, as a result, probably favors a conformation of the apoenzyme that is competent for acquiring the cofactor. In Shigella dysenteriae serotype 1 (strain Sd197), this protein is Chaperone protein TorD.